The sequence spans 226 residues: ATP synthase F(0) complex subunit a (226 aa).

The next 6 membrane-spanning stretches (helical) occupy residues 14–34, 68–88, 97–117, 138–158, 164–184, and 193–213; these read ILGISILPLIMIFPCLLFSAP, WTLMLITLIMFIASTNLLGLL, QLSMNMGMAVPLWLGTVLMGF, IPMLIIIETISLFIQPVALAV, ITAGHLLIHLIGSATLALSSI, and FTILFLLTILEIAVALIQAYV.

Belongs to the ATPase A chain family. Component of the ATP synthase complex composed at least of ATP5F1A/subunit alpha, ATP5F1B/subunit beta, ATP5MC1/subunit c (homooctomer), MT-ATP6/subunit a, MT-ATP8/subunit 8, ATP5ME/subunit e, ATP5MF/subunit f, ATP5MG/subunit g, ATP5MK/subunit k, ATP5MJ/subunit j, ATP5F1C/subunit gamma, ATP5F1D/subunit delta, ATP5F1E/subunit epsilon, ATP5PF/subunit F6, ATP5PB/subunit b, ATP5PD/subunit d, ATP5PO/subunit OSCP. ATP synthase complex consists of a soluble F(1) head domain (subunits alpha(3) and beta(3)) - the catalytic core - and a membrane F(0) domain - the membrane proton channel (subunits c, a, 8, e, f, g, k and j). These two domains are linked by a central stalk (subunits gamma, delta, and epsilon) rotating inside the F1 region and a stationary peripheral stalk (subunits F6, b, d, and OSCP). Interacts with DNAJC30; interaction is direct.

Its subcellular location is the mitochondrion inner membrane. It catalyses the reaction H(+)(in) = H(+)(out). Functionally, subunit a, of the mitochondrial membrane ATP synthase complex (F(1)F(0) ATP synthase or Complex V) that produces ATP from ADP in the presence of a proton gradient across the membrane which is generated by electron transport complexes of the respiratory chain. ATP synthase complex consist of a soluble F(1) head domain - the catalytic core - and a membrane F(1) domain - the membrane proton channel. These two domains are linked by a central stalk rotating inside the F(1) region and a stationary peripheral stalk. During catalysis, ATP synthesis in the catalytic domain of F(1) is coupled via a rotary mechanism of the central stalk subunits to proton translocation. With the subunit c (ATP5MC1), forms the proton-conducting channel in the F(0) domain, that contains two crucial half-channels (inlet and outlet) that facilitate proton movement from the mitochondrial intermembrane space (IMS) into the matrix. Protons are taken up via the inlet half-channel and released through the outlet half-channel, following a Grotthuss mechanism. This chain is ATP synthase F(0) complex subunit a, found in Tachyglossus aculeatus aculeatus (Southeast Australian short-beaked echidna).